The sequence spans 182 residues: Translation initiation factor IF-3 (182 aa).

Residues 1 to 22 (MPLGDCNISTPDNKQNRKNQEI) form a disordered region.

The protein belongs to the IF-3 family. As to quaternary structure, monomer.

It localises to the cytoplasm. In terms of biological role, IF-3 binds to the 30S ribosomal subunit and shifts the equilibrium between 70S ribosomes and their 50S and 30S subunits in favor of the free subunits, thus enhancing the availability of 30S subunits on which protein synthesis initiation begins. In Xanthomonas axonopodis pv. citri (strain 306), this protein is Translation initiation factor IF-3.